Reading from the N-terminus, the 536-residue chain is Atrial natriuretic peptide receptor 3 (536 aa).

The first 26 residues, 1-26, serve as a signal peptide directing secretion; sequence MRSLLLFTFSACVLLARVLLAGGASS. The propeptide occupies 27–40; that stretch reads GAGDTRPGSRRRAR. Residues 41–478 lie on the Extracellular side of the membrane; the sequence is EALAAQKIEV…KSSGGLEESA (438 aa). N-linked (GlcNAc...) asparagine glycosylation is present at N81. S101, V130, and C131 together coordinate chloride. 2 disulfides stabilise this stretch: C103–C131 and C208–C256. Residues N288 and N389 are each glycosylated (N-linked (GlcNAc...) asparagine). A helical membrane pass occupies residues 479-499; the sequence is VTGIVVGALLGAGLLMAFYFF. Residues 500–536 lie on the Cytoplasmic side of the membrane; that stretch reads RKKYRITIERRNQQEESNIGKHRELREDSIRSHFSVA.

The protein belongs to the ANF receptor family. Homodimer; disulfide-linked. Interacts with OSTN.

The protein resides in the cell membrane. In terms of biological role, receptor for the natriuretic peptide hormones, binding with similar affinities atrial natriuretic peptide NPPA/ANP, brain natriuretic peptide NPPB/BNP, and C-type natriuretic peptide NPPC/CNP. May function as a clearance receptor for NPPA, NPPB and NPPC, regulating their local concentrations and effects. Acts as a regulator of osteoblast differentiation and bone growth by binding to its ligand osteocrin, thereby preventing binding between NPR3/NPR-C and natriuretic peptides, leading to increase cGMP production. The protein is Atrial natriuretic peptide receptor 3 (Npr3) of Mus musculus (Mouse).